The chain runs to 133 residues: Large-conductance mechanosensitive channel (133 aa).

Helical transmembrane passes span 14-34 and 67-87; these read VIDL…VSSL and GNFI…FMFV.

It belongs to the MscL family. Homopentamer.

It localises to the cell membrane. Channel that opens in response to stretch forces in the membrane lipid bilayer. May participate in the regulation of osmotic pressure changes within the cell. The chain is Large-conductance mechanosensitive channel from Bacillus mycoides (strain KBAB4) (Bacillus weihenstephanensis).